The primary structure comprises 673 residues: Glycine--tRNA ligase beta subunit (673 aa).

This sequence belongs to the class-II aminoacyl-tRNA synthetase family. In terms of assembly, tetramer of two alpha and two beta subunits.

Its subcellular location is the cytoplasm. The catalysed reaction is tRNA(Gly) + glycine + ATP = glycyl-tRNA(Gly) + AMP + diphosphate. This Lactococcus lactis subsp. cremoris (strain MG1363) protein is Glycine--tRNA ligase beta subunit.